The following is a 172-amino-acid chain: PRELI domain containing protein 3A (172 aa).

A PRELI/MSF1 domain is found at methionine 1–serine 172.

The protein belongs to the slowmo family. In terms of assembly, interacts with TRIAP1.

The protein resides in the mitochondrion. In terms of biological role, in vitro, the TRIAP1:PRELID3A complex mediates the transfer of phosphatidic acid (PA) between liposomes and probably functions as a PA transporter across the mitochondrion intermembrane space. Phosphatidic acid import is required for cardiolipin (CL) synthesis in the mitochondrial inner membrane. The chain is PRELI domain containing protein 3A (PRELID3A) from Homo sapiens (Human).